Reading from the N-terminus, the 394-residue chain is Small ribosomal subunit protein mS79 (rPPR3b) (394 aa).

The transit peptide at Met-1–Phe-24 directs the protein to the mitochondrion. 8 PPR repeats span residues Lys-105–Arg-139, Thr-140–Lys-170, Asp-176–Pro-210, Asp-211–Arg-245, Asp-246–Pro-280, Asp-281–Pro-315, Leu-316–Val-350, and Asp-351–Gln-385.

This sequence belongs to the PPR family. P subfamily. In terms of assembly, component of the mitochondrial ribosome small subunit.

The protein localises to the mitochondrion. The polypeptide is Small ribosomal subunit protein mS79 (rPPR3b) (Arabidopsis thaliana (Mouse-ear cress)).